Here is a 275-residue protein sequence, read N- to C-terminus: Membrane protein insertase YidC (275 aa).

An N-terminal signal peptide occupies residues 1–22 (MKKYKRLLLMAGLVTLVFVLSA). Cysteine 23 carries N-palmitoyl cysteine lipidation. Residue cysteine 23 is the site of S-diacylglycerol cysteine attachment. A run of 4 helical transmembrane segments spans residues 53 to 73 (LGGS…IILL), 127 to 147 (YIGC…YQAI), 169 to 189 (YLIL…LSSM), and 206 to 226 (PAMI…YWVV). The span at 249–266 (EEAARQAKARERALERAK) shows a compositional bias: basic and acidic residues. Residues 249-275 (EEAARQAKARERALERAKSPKKKGKKK) are disordered.

This sequence belongs to the OXA1/ALB3/YidC family. Type 2 subfamily.

It localises to the cell membrane. Functionally, required for the insertion and/or proper folding and/or complex formation of integral membrane proteins into the membrane. Involved in integration of membrane proteins that insert both dependently and independently of the Sec translocase complex, as well as at least some lipoproteins. The chain is Membrane protein insertase YidC from Enterococcus faecalis (strain ATCC 700802 / V583).